The primary structure comprises 43 residues: Protein PsbN (43 aa).

A helical membrane pass occupies residues 4–24; the sequence is AIVLSISMAAVVVAITGISIY.

Belongs to the PsbN family.

The protein localises to the cellular thylakoid membrane. In terms of biological role, may play a role in photosystem I and II biogenesis. In Nostoc punctiforme (strain ATCC 29133 / PCC 73102), this protein is Protein PsbN.